The sequence spans 287 residues: Protease HtpX (287 aa).

The next 2 helical transmembrane spans lie at 4-24 (IFLL…VMSI) and 33-53 (GGLL…SLAI). Zn(2+) is bound at residue His139. Glu140 is an active-site residue. Position 143 (His143) interacts with Zn(2+). 2 consecutive transmembrane segments (helical) span residues 154–174 (LIQG…ASII) and 195–215 (AVVF…VAYF). Glu220 provides a ligand contact to Zn(2+).

The protein belongs to the peptidase M48B family. Zn(2+) serves as cofactor.

The protein localises to the cell inner membrane. In Shewanella loihica (strain ATCC BAA-1088 / PV-4), this protein is Protease HtpX.